The primary structure comprises 1050 residues: Nuclear pore complex-interacting protein family member B3 (1050 aa).

The helical transmembrane segment at 63–87 (VIIAFPTSYKVVITLWIVYLWVSLL) threads the bilayer. Disordered stretches follow at residues 241–262 (NRMGHQPPPPTQQHSITDNSLS), 290–574 (LTPL…NIKT), and 785–1050 (ERLR…RRLS). The segment covering 252-262 (QQHSITDNSLS) has biased composition (polar residues). Residues 349-359 (PLPPSALPSAP) are compositionally biased toward pro residues. 7 stretches are compositionally biased toward basic and acidic residues: residues 406-416 (DNIKTPAERLR), 448-458 (DNIKTPAERLR), 490-500 (DNIKTPAERLR), 528-538 (DNIKTPAERLR), 820-830 (DNIKTPAERLR), 862-872 (DNIKTPAERLR), and 904-914 (DNIKTPAERLR).

Belongs to the NPIP family.

It localises to the membrane. The chain is Nuclear pore complex-interacting protein family member B3 (NPIPB3) from Homo sapiens (Human).